The following is a 165-amino-acid chain: Large ribosomal subunit protein uL22c (165 aa).

Belongs to the universal ribosomal protein uL22 family. As to quaternary structure, part of the 50S ribosomal subunit.

The protein localises to the plastid. It is found in the chloroplast. Its function is as follows. This protein binds specifically to 23S rRNA. Functionally, the globular domain of the protein is located near the polypeptide exit tunnel on the outside of the subunit, while an extended beta-hairpin is found that lines the wall of the exit tunnel in the center of the 70S ribosome. This chain is Large ribosomal subunit protein uL22c (rpl22), found in Daucus carota (Wild carrot).